The primary structure comprises 78 residues: Large ribosomal subunit protein uL29 (78 aa).

This sequence belongs to the universal ribosomal protein uL29 family.

This is Large ribosomal subunit protein uL29 from Crocosphaera subtropica (strain ATCC 51142 / BH68) (Cyanothece sp. (strain ATCC 51142)).